Consider the following 310-residue polypeptide: tRNA dimethylallyltransferase (310 aa).

14-21 provides a ligand contact to ATP; that stretch reads GPTASGKS. 16-21 lines the substrate pocket; it reads TASGKS. Interaction with substrate tRNA regions lie at residues 39–42 and 163–167; these read DSMQ and QRIVR.

The protein belongs to the IPP transferase family. Monomer. Mg(2+) serves as cofactor.

It catalyses the reaction adenosine(37) in tRNA + dimethylallyl diphosphate = N(6)-dimethylallyladenosine(37) in tRNA + diphosphate. Catalyzes the transfer of a dimethylallyl group onto the adenine at position 37 in tRNAs that read codons beginning with uridine, leading to the formation of N6-(dimethylallyl)adenosine (i(6)A). The polypeptide is tRNA dimethylallyltransferase (Brucella ovis (strain ATCC 25840 / 63/290 / NCTC 10512)).